Consider the following 221-residue polypeptide: Phosphoglycolate phosphatase (221 aa).

Aspartate 7 functions as the Nucleophile in the catalytic mechanism. The Mg(2+) site is built by aspartate 7 and aspartate 9. Lysine 148 contacts substrate. 2 residues coordinate Mg(2+): aspartate 171 and aspartate 175.

It belongs to the archaeal SPP-like hydrolase family. It depends on Mg(2+) as a cofactor.

It carries out the reaction 2-phosphoglycolate + H2O = glycolate + phosphate. Its function is as follows. Catalyzes the dephosphorylation of 2-phosphoglycolate. This Methanothermobacter thermautotrophicus (strain ATCC 29096 / DSM 1053 / JCM 10044 / NBRC 100330 / Delta H) (Methanobacterium thermoautotrophicum) protein is Phosphoglycolate phosphatase.